A 351-amino-acid polypeptide reads, in one-letter code: Cell division protein FtsZ (351 aa).

GTP-binding positions include 31 to 35 (GAGNN), 118 to 120 (GTG), E149, R153, and D197.

The protein belongs to the FtsZ family. As to quaternary structure, homodimer. Polymerizes to form a dynamic ring structure in a strictly GTP-dependent manner. Interacts directly with several other division proteins. Interacts with FtsA.

It is found in the cytoplasm. In terms of biological role, essential cell division protein that forms a contractile ring structure (Z ring) at the future cell division site. The regulation of the ring assembly controls the timing and the location of cell division. One of the functions of the FtsZ ring is to recruit other cell division proteins to the septum to produce a new cell wall between the dividing cells. Binds GTP and shows GTPase activity. This Thermotoga maritima (strain ATCC 43589 / DSM 3109 / JCM 10099 / NBRC 100826 / MSB8) protein is Cell division protein FtsZ.